A 190-amino-acid chain; its full sequence is Acireductone dioxygenase (190 aa).

4 residues coordinate Fe(2+): H101, H103, E107, and H145. 4 residues coordinate Ni(2+): H101, H103, E107, and H145.

This sequence belongs to the acireductone dioxygenase (ARD) family. Monomer. Fe(2+) serves as cofactor. Ni(2+) is required as a cofactor.

The enzyme catalyses 1,2-dihydroxy-5-(methylsulfanyl)pent-1-en-3-one + O2 = 3-(methylsulfanyl)propanoate + CO + formate + 2 H(+). It carries out the reaction 1,2-dihydroxy-5-(methylsulfanyl)pent-1-en-3-one + O2 = 4-methylsulfanyl-2-oxobutanoate + formate + 2 H(+). Its pathway is amino-acid biosynthesis; L-methionine biosynthesis via salvage pathway; L-methionine from S-methyl-5-thio-alpha-D-ribose 1-phosphate: step 5/6. Its function is as follows. Catalyzes 2 different reactions between oxygen and the acireductone 1,2-dihydroxy-3-keto-5-methylthiopentene (DHK-MTPene) depending upon the metal bound in the active site. Fe-containing acireductone dioxygenase (Fe-ARD) produces formate and 2-keto-4-methylthiobutyrate (KMTB), the alpha-ketoacid precursor of methionine in the methionine recycle pathway. Ni-containing acireductone dioxygenase (Ni-ARD) produces methylthiopropionate, carbon monoxide and formate, and does not lie on the methionine recycle pathway. The polypeptide is Acireductone dioxygenase (Saccharopolyspora erythraea (strain ATCC 11635 / DSM 40517 / JCM 4748 / NBRC 13426 / NCIMB 8594 / NRRL 2338)).